We begin with the raw amino-acid sequence, 160 residues long: SsrA-binding protein (160 aa).

Belongs to the SmpB family.

It localises to the cytoplasm. Required for rescue of stalled ribosomes mediated by trans-translation. Binds to transfer-messenger RNA (tmRNA), required for stable association of tmRNA with ribosomes. tmRNA and SmpB together mimic tRNA shape, replacing the anticodon stem-loop with SmpB. tmRNA is encoded by the ssrA gene; the 2 termini fold to resemble tRNA(Ala) and it encodes a 'tag peptide', a short internal open reading frame. During trans-translation Ala-aminoacylated tmRNA acts like a tRNA, entering the A-site of stalled ribosomes, displacing the stalled mRNA. The ribosome then switches to translate the ORF on the tmRNA; the nascent peptide is terminated with the 'tag peptide' encoded by the tmRNA and targeted for degradation. The ribosome is freed to recommence translation, which seems to be the essential function of trans-translation. The sequence is that of SsrA-binding protein from Klebsiella pneumoniae (strain 342).